We begin with the raw amino-acid sequence, 415 residues long: Serine hydroxymethyltransferase (415 aa).

(6S)-5,6,7,8-tetrahydrofolate is bound by residues leucine 117 and 121–123 (GHL). The residue at position 226 (lysine 226) is an N6-(pyridoxal phosphate)lysine.

The protein belongs to the SHMT family. In terms of assembly, homodimer. Requires pyridoxal 5'-phosphate as cofactor.

Its subcellular location is the cytoplasm. It carries out the reaction (6R)-5,10-methylene-5,6,7,8-tetrahydrofolate + glycine + H2O = (6S)-5,6,7,8-tetrahydrofolate + L-serine. The protein operates within one-carbon metabolism; tetrahydrofolate interconversion. Its pathway is amino-acid biosynthesis; glycine biosynthesis; glycine from L-serine: step 1/1. Catalyzes the reversible interconversion of serine and glycine with tetrahydrofolate (THF) serving as the one-carbon carrier. This reaction serves as the major source of one-carbon groups required for the biosynthesis of purines, thymidylate, methionine, and other important biomolecules. Also exhibits THF-independent aldolase activity toward beta-hydroxyamino acids, producing glycine and aldehydes, via a retro-aldol mechanism. The chain is Serine hydroxymethyltransferase from Dehalococcoides mccartyi (strain CBDB1).